Consider the following 738-residue polypeptide: Polyribonucleotide nucleotidyltransferase (738 aa).

Residues Asp528 and Asp534 each contribute to the Mg(2+) site. A KH domain is found at 594 to 653 (PRVVRVKIPVQKIGELIGPKGKVINSIQDETGAEISIEDDGTVYIGSSQADSSEKAVAMV). The 73-residue stretch at 665–737 (GSQFLGTVVK…DRGKLCLVAV (73 aa)) folds into the S1 motif domain.

Belongs to the polyribonucleotide nucleotidyltransferase family. The cofactor is Mg(2+).

The protein resides in the cytoplasm. The catalysed reaction is RNA(n+1) + phosphate = RNA(n) + a ribonucleoside 5'-diphosphate. Functionally, involved in mRNA degradation. Catalyzes the phosphorolysis of single-stranded polyribonucleotides processively in the 3'- to 5'-direction. The sequence is that of Polyribonucleotide nucleotidyltransferase from Tropheryma whipplei (strain Twist) (Whipple's bacillus).